The sequence spans 131 residues: Sec-independent protein translocase protein TatB (131 aa).

The helical transmembrane segment at 2-22 (LGSLSWEHMLVLVVVGLVVLG) threads the bilayer. Positions 96 to 131 (AFDRPVNGAAAQPPPAPAPPPEPHRPGQTPFDADAT) are disordered. The span at 107–116 (QPPPAPAPPP) shows a compositional bias: pro residues.

It belongs to the TatB family. In terms of assembly, the Tat system comprises two distinct complexes: a TatABC complex, containing multiple copies of TatA, TatB and TatC subunits, and a separate TatA complex, containing only TatA subunits. Substrates initially bind to the TatABC complex, which probably triggers association of the separate TatA complex to form the active translocon.

The protein resides in the cell membrane. In terms of biological role, part of the twin-arginine translocation (Tat) system that transports large folded proteins containing a characteristic twin-arginine motif in their signal peptide across membranes. Together with TatC, TatB is part of a receptor directly interacting with Tat signal peptides. TatB may form an oligomeric binding site that transiently accommodates folded Tat precursor proteins before their translocation. The chain is Sec-independent protein translocase protein TatB from Mycobacterium avium (strain 104).